We begin with the raw amino-acid sequence, 202 residues long: Regulator of G-protein signaling 16 (202 aa).

S-palmitoyl cysteine attachment occurs at residues C2 and C12. In terms of domain architecture, RGS spans 65 to 181 (SFDLLLSSKN…LKSPAYRDLA (117 aa)). Residue Y168 is modified to Phosphotyrosine; by EGFR. Phosphotyrosine is present on Y177.

In terms of assembly, interacts with GNAI1 and GNAQ. Interacts with GNAI2, GNAI3 and GNAO1. Palmitoylated on Cys-2 and/or Cys-12. In terms of processing, phosphorylated. Phosphorylation at Tyr-168 by EGFR enhances GTPase accelerating (GAP) activity toward GNAI1. Abundantly expressed in retina with lower levels of expression in most other tissues.

It is found in the membrane. Regulates G protein-coupled receptor signaling cascades. Inhibits signal transduction by increasing the GTPase activity of G protein alpha subunits, thereby driving them into their inactive GDP-bound form. Plays an important role in the phototransduction cascade by regulating the lifetime and effective concentration of activated transducin alpha. May regulate extra and intracellular mitogenic signals. In Homo sapiens (Human), this protein is Regulator of G-protein signaling 16 (RGS16).